Here is a 357-residue protein sequence, read N- to C-terminus: ATP-dependent 6-phosphofructokinase (357 aa).

ATP is bound by residues Gly-12, Lys-80–Gly-81, and Gly-107–Ser-110. Asp-108 contributes to the Mg(2+) binding site. Substrate is bound by residues Thr-131–Asp-133, Arg-168, Met-175–Arg-177, Glu-229, Arg-272, and His-278–Arg-281. Asp-133 (proton acceptor) is an active-site residue.

It belongs to the phosphofructokinase type A (PFKA) family. Mixed-substrate PFK group III subfamily. Homodimer or homotetramer. Mg(2+) serves as cofactor.

Its subcellular location is the cytoplasm. The catalysed reaction is beta-D-fructose 6-phosphate + ATP = beta-D-fructose 1,6-bisphosphate + ADP + H(+). It functions in the pathway carbohydrate degradation; glycolysis; D-glyceraldehyde 3-phosphate and glycerone phosphate from D-glucose: step 3/4. Subject to allosteric activation by ADP and other diphosphonucleosides, and inhibition by phosphoenolpyruvate. Catalyzes the phosphorylation of D-fructose 6-phosphate to fructose 1,6-bisphosphate by ATP, the first committing step of glycolysis. The polypeptide is ATP-dependent 6-phosphofructokinase (Trichormus variabilis (strain ATCC 29413 / PCC 7937) (Anabaena variabilis)).